A 246-amino-acid polypeptide reads, in one-letter code: MPCLKITLAYDGSNYAGWQVQPEAHGPTVQGEVAAALKRLTGEEITPVAAGRTDAGVHARGQVISFSTRARIPVERWPLALNSVLPADIAALEAVEVAPDFHARYCAKRKWYRYTIYNNRVPDVFCRRYSWHLRQPLDVIAMARAAAYLQGCHDFRSFCAAGSPVRHFERQVQQASVSQNGPFIYFDVIADGFLYHMVRIMVGTLVEIGRRRLVPEAIPAILAARSREKAGPTAPARGLCLERVEY.

Catalysis depends on D54, which acts as the Nucleophile. Y112 contributes to the substrate binding site.

The protein belongs to the tRNA pseudouridine synthase TruA family. Homodimer.

The catalysed reaction is uridine(38/39/40) in tRNA = pseudouridine(38/39/40) in tRNA. Formation of pseudouridine at positions 38, 39 and 40 in the anticodon stem and loop of transfer RNAs. The sequence is that of tRNA pseudouridine synthase A from Moorella thermoacetica (strain ATCC 39073 / JCM 9320).